The sequence spans 326 residues: Glyoxylate/hydroxypyruvate reductase B (326 aa).

Active-site residues include Arg237 and Glu266. The Proton donor role is filled by His285.

It belongs to the D-isomer specific 2-hydroxyacid dehydrogenase family. GhrB subfamily. Homodimer.

It is found in the cytoplasm. It carries out the reaction glycolate + NADP(+) = glyoxylate + NADPH + H(+). The catalysed reaction is (R)-glycerate + NAD(+) = 3-hydroxypyruvate + NADH + H(+). It catalyses the reaction (R)-glycerate + NADP(+) = 3-hydroxypyruvate + NADPH + H(+). Its function is as follows. Catalyzes the NADPH-dependent reduction of glyoxylate and hydroxypyruvate into glycolate and glycerate, respectively. This is Glyoxylate/hydroxypyruvate reductase B from Yersinia pseudotuberculosis serotype O:3 (strain YPIII).